Consider the following 596-residue polypeptide: Elongation factor 4 (596 aa).

The tr-type G domain occupies 2-184; that stretch reads DHIRNFSIIA…AVVARIPPPK (183 aa). GTP-binding positions include 14 to 19 and 131 to 134; these read DHGKST and NKID.

This sequence belongs to the TRAFAC class translation factor GTPase superfamily. Classic translation factor GTPase family. LepA subfamily.

The protein localises to the cell inner membrane. The catalysed reaction is GTP + H2O = GDP + phosphate + H(+). Its function is as follows. Required for accurate and efficient protein synthesis under certain stress conditions. May act as a fidelity factor of the translation reaction, by catalyzing a one-codon backward translocation of tRNAs on improperly translocated ribosomes. Back-translocation proceeds from a post-translocation (POST) complex to a pre-translocation (PRE) complex, thus giving elongation factor G a second chance to translocate the tRNAs correctly. Binds to ribosomes in a GTP-dependent manner. The polypeptide is Elongation factor 4 (Dechloromonas aromatica (strain RCB)).